A 386-amino-acid chain; its full sequence is Erythronate-4-phosphate dehydrogenase (386 aa).

The substrate site is built by S59 and T81. D162 contributes to the NAD(+) binding site. The active site involves R239. An NAD(+)-binding site is contributed by D262. E267 is an active-site residue. H284 acts as the Proton donor in catalysis. Residue G287 participates in NAD(+) binding. Y288 is a binding site for substrate.

Belongs to the D-isomer specific 2-hydroxyacid dehydrogenase family. PdxB subfamily. As to quaternary structure, homodimer.

The protein resides in the cytoplasm. It catalyses the reaction 4-phospho-D-erythronate + NAD(+) = (R)-3-hydroxy-2-oxo-4-phosphooxybutanoate + NADH + H(+). It participates in cofactor biosynthesis; pyridoxine 5'-phosphate biosynthesis; pyridoxine 5'-phosphate from D-erythrose 4-phosphate: step 2/5. Catalyzes the oxidation of erythronate-4-phosphate to 3-hydroxy-2-oxo-4-phosphonooxybutanoate. The polypeptide is Erythronate-4-phosphate dehydrogenase (Psychrobacter cryohalolentis (strain ATCC BAA-1226 / DSM 17306 / VKM B-2378 / K5)).